A 98-amino-acid chain; its full sequence is NADH-ubiquinone oxidoreductase chain 4L (98 aa).

Transmembrane regions (helical) follow at residues 1-21 (MTPT…GLAF), 26-46 (LLSA…ALSL), and 59-79 (APML…ALLV).

It belongs to the complex I subunit 4L family.

It localises to the mitochondrion membrane. The enzyme catalyses a ubiquinone + NADH + 5 H(+)(in) = a ubiquinol + NAD(+) + 4 H(+)(out). In terms of biological role, core subunit of the mitochondrial membrane respiratory chain NADH dehydrogenase (Complex I) which catalyzes electron transfer from NADH through the respiratory chain, using ubiquinone as an electron acceptor. Part of the enzyme membrane arm which is embedded in the lipid bilayer and involved in proton translocation. The sequence is that of NADH-ubiquinone oxidoreductase chain 4L (MT-ND4L) from Gadus morhua (Atlantic cod).